Consider the following 387-residue polypeptide: Cyclin-B1-4 (387 aa).

The segment at 1–29 is disordered; it reads MASSRVSDLPHQRGIAGEIKPKNVAGHGR.

It belongs to the cyclin family. Cyclin AB subfamily.

The chain is Cyclin-B1-4 (CYCB1-4) from Arabidopsis thaliana (Mouse-ear cress).